We begin with the raw amino-acid sequence, 318 residues long: Magnetosome protein MamM (318 aa).

The tract at residues methionine 1–aspartate 210 is transmembrane domain (TMD). Helical transmembrane passes span isoleucine 13 to leucine 33, alanine 39 to isoleucine 59, phenylalanine 81 to histidine 101, and leucine 117 to serine 137. Positions histidine 211–asparagine 318 are C-terminal domain (CTD). Residues aspartate 249, histidine 264, histidine 285, and glutamate 289 each contribute to the Fe cation site.

Belongs to the cation diffusion facilitator (CDF) transporter (TC 2.A.4) family. As to quaternary structure, forms homodimers via its C-terminal domain (CTD) in the presence of metal cations. Interacts with MamB via their CTD.

Its subcellular location is the magnetosome membrane. It localises to the cell inner membrane. Its function is as follows. Probably plays a role in biomineralization. Required for stable accumulation of MamB. Probably binds and transports iron. May nucleate iron crystal formation. The protein is Magnetosome protein MamM (mamM) of Paramagnetospirillum magneticum (strain ATCC 700264 / AMB-1) (Magnetospirillum magneticum).